Reading from the N-terminus, the 314-residue chain is Ribosomal protein L11 methyltransferase (314 aa).

The S-adenosyl-L-methionine site is built by Thr161, Gly182, Asp204, and Asn248.

It belongs to the methyltransferase superfamily. PrmA family.

It is found in the cytoplasm. It catalyses the reaction L-lysyl-[protein] + 3 S-adenosyl-L-methionine = N(6),N(6),N(6)-trimethyl-L-lysyl-[protein] + 3 S-adenosyl-L-homocysteine + 3 H(+). Methylates ribosomal protein L11. The polypeptide is Ribosomal protein L11 methyltransferase (Listeria innocua serovar 6a (strain ATCC BAA-680 / CLIP 11262)).